A 228-amino-acid polypeptide reads, in one-letter code: UPF0173 metal-dependent hydrolase RBAM_026340 (228 aa).

The protein belongs to the UPF0173 family.

This chain is UPF0173 metal-dependent hydrolase RBAM_026340, found in Bacillus velezensis (strain DSM 23117 / BGSC 10A6 / LMG 26770 / FZB42) (Bacillus amyloliquefaciens subsp. plantarum).